A 929-amino-acid polypeptide reads, in one-letter code: Urea transporter 2 (929 aa).

A compositionally biased stretch (basic and acidic residues) spans Met1 to Asp11. Residues Met1–Arg89 are disordered. Positions Ser31–Ser42 are enriched in low complexity. Basic and acidic residues predominate over residues Pro55 to Arg88. 9 helical membrane passes run Gly133–Ile155, Ile162–Ser179, Ala184–Phe204, Trp212–Leu232, Leu241–His261, Gly310–Ile330, Ile349–Val371, Leu378–Ala399, and Val400–Leu420. Residues Ser451–Val480 form a disordered region. Residues Asn458–Gln470 show a composition bias toward gly residues. Ser486 carries the post-translational modification Phosphoserine. Helical transmembrane passes span Gly609–Leu629, Ala647–Phe667, Trp675–Leu695, and Leu704–His724. The N-linked (GlcNAc...) asparagine glycan is linked to Asn742. 4 helical membrane-spanning segments follow: residues Gly773 to Ile793, Ile812 to Phe832, Leu841 to Leu861, and Val863 to Leu883.

The protein belongs to the urea transporter family. In terms of assembly, interacts with SNAPIN which enhances its urea transport activity. Expressed in the inner medulla of the kidney. In terms of tissue distribution, expressed in both the inner and outer renal medulla of the kidney.

The protein localises to the apical cell membrane. The protein resides in the cell membrane. The enzyme catalyses urea(in) = urea(out). Inhibited by phloretin. Activated by vasopressin, forskolin, 3-isobutyl-1-methylxanthine (IBMX) and cAMP. With respect to regulation, inhibited by phloretin. Its activity is regulated as follows. Inhibited by urea analogs and phloretin and activated by forskolin. Inhibited by phloretin and activated by forskolin. In terms of biological role, mediates the transport of urea driven by a concentration gradient across the cell membrane of the kidney inner medullary collecting duct which is critical to the urinary concentrating mechanism. This chain is Urea transporter 2 (Slc14a2), found in Rattus norvegicus (Rat).